A 200-amino-acid chain; its full sequence is 3-isopropylmalate dehydratase small subunit (200 aa).

This sequence belongs to the LeuD family. LeuD type 1 subfamily. In terms of assembly, heterodimer of LeuC and LeuD.

It catalyses the reaction (2R,3S)-3-isopropylmalate = (2S)-2-isopropylmalate. It functions in the pathway amino-acid biosynthesis; L-leucine biosynthesis; L-leucine from 3-methyl-2-oxobutanoate: step 2/4. Catalyzes the isomerization between 2-isopropylmalate and 3-isopropylmalate, via the formation of 2-isopropylmaleate. This chain is 3-isopropylmalate dehydratase small subunit, found in Actinobacillus pleuropneumoniae serotype 5b (strain L20).